The sequence spans 318 residues: Ribosomal protein L11 methyltransferase (318 aa).

S-adenosyl-L-methionine-binding residues include Thr159, Gly180, Asp202, and Asn253.

It belongs to the methyltransferase superfamily. PrmA family.

The protein resides in the cytoplasm. It carries out the reaction L-lysyl-[protein] + 3 S-adenosyl-L-methionine = N(6),N(6),N(6)-trimethyl-L-lysyl-[protein] + 3 S-adenosyl-L-homocysteine + 3 H(+). Methylates ribosomal protein L11. This chain is Ribosomal protein L11 methyltransferase, found in Lachnospira eligens (strain ATCC 27750 / DSM 3376 / VPI C15-48 / C15-B4) (Eubacterium eligens).